The following is a 77-amino-acid chain: Small ribosomal subunit protein bS20 (77 aa).

The protein belongs to the bacterial ribosomal protein bS20 family.

In terms of biological role, binds directly to 16S ribosomal RNA. This chain is Small ribosomal subunit protein bS20, found in Lactococcus lactis subsp. lactis (strain IL1403) (Streptococcus lactis).